Consider the following 288-residue polypeptide: MSRAITRAQLDKLVRSITKFYPQKYADKSWDNTGLLIDCSTAQVTTADANAKTKVLLTVDLTKSVAQEAVDANCNVIVAYHPFIFPSWNRLSPHTNPQHETAIKLIQYGISVYCPHTAVDAARGGVNDWLVRGLNNGENVAKSYALETVSGETDDLIGYGRFVEFNKDISLEQIVKNVKRVLRVPYVQVASLAAPSAWNQLKIKKVAVCAGSGSGVFKQLKEDVDLYYTGEMSHHEVLKWKEMGKTVIVCNHSNTERGFLQDVMKGLLQDEGHEVVVSKMDCDPLTVA.

It belongs to the GTP cyclohydrolase I type 2/NIF3 family. May interact with NGG1.

The protein localises to the mitochondrion. This chain is NGG1-interacting factor 3, found in Saccharomyces cerevisiae (strain ATCC 204508 / S288c) (Baker's yeast).